We begin with the raw amino-acid sequence, 383 residues long: Chitinase-3-like protein 1 (383 aa).

An N-terminal signal peptide occupies residues 1 to 21; it reads MGVKASQTGFVVLVLLQCCSA. The 362-residue stretch at 22–383 folds into the GH18 domain; it reads YKLVCYYTSW…NAIKDALAAT (362 aa). Cysteine 26 and cysteine 51 are oxidised to a cystine. Residue asparagine 60 is glycosylated (N-linked (GlcNAc...) asparagine). Chitin contacts are provided by residues 70–71, 97–100, tyrosine 141, 204–207, and arginine 263; these read EW, GGWN, and MTYD. Cysteine 300 and cysteine 364 are oxidised to a cystine. Residues 324–338 are important for AKT1 activation and IL8 production; that stretch reads QWVGYDDQESVKSKV. Tryptophan 352 serves as a coordination point for chitin.

Belongs to the glycosyl hydrolase 18 family. In terms of assembly, monomer. Post-translationally, glycosylated. As to expression, present in activated macrophages, articular chondrocytes, synovial cells as well as in liver. Very low or undetectable expression in non-inflammatory colon. Undetectable in muscle tissues, lung, pancreas, mononuclear cells, or fibroblasts.

The protein resides in the secreted. Its subcellular location is the extracellular space. The protein localises to the cytoplasm. It localises to the perinuclear region. It is found in the endoplasmic reticulum. In terms of biological role, carbohydrate-binding lectin with a preference for chitin. Has no chitinase activity. May play a role in tissue remodeling and in the capacity of cells to respond to and cope with changes in their environment. Plays a role in T-helper cell type 2 (Th2) inflammatory response and IL-13-induced inflammation, regulating allergen sensitization, inflammatory cell apoptosis, dendritic cell accumulation and M2 macrophage differentiation. Facilitates invasion of pathogenic enteric bacteria into colonic mucosa and lymphoid organs. Mediates activation of AKT1 signaling pathway and subsequent IL8 production in colonic epithelial cells. Regulates antibacterial responses in lung by contributing to macrophage bacterial killing, controlling bacterial dissemination and augmenting host tolerance. Also regulates hyperoxia-induced injury, inflammation and epithelial apoptosis in lung. The protein is Chitinase-3-like protein 1 (CHI3L1) of Homo sapiens (Human).